A 399-amino-acid polypeptide reads, in one-letter code: MLNRVKLEIKDPMDWNTMYQENEMYSGIHNMTNVLPSNSFLPNDVSTVTTSMPYMSNGLPGPVTSIQGNIGSLGSMPQGMVGSLAPPPSTAAYPLGYCQGESEFQRDPRTYRRNYSHAKPPYSYISLITMAIQQAPNKMMTLNEIYQWIIDLFPYYRQNQQRWQNSIRHSLSFNDCFVKVPRSPEKPGKGSYWTLHPESGNMFENGCYLRRQKRFKCERSKSGEGEKKVNKPGEETGGNLKENPVGYDDCSSSRSPQAAVNDGGRDSTGSSIHQACGSSPVGLSPTSEQAGTASQLMYPLGLSNDGYLGLVGEDVHLKHDPFSGRHPFSITQLMSSEQDQTYANKMEMCPTTDHLVHYSNYSSDYHNMASKNGLDMQTSSSTDNGYYANMYSRPILSSL.

Positions 119 to 213 (KPPYSYISLI…ENGCYLRRQK (95 aa)) form a DNA-binding region, fork-head. The span at 219-234 (RSKSGEGEKKVNKPGE) shows a compositional bias: basic and acidic residues. The interval 219–290 (RSKSGEGEKK…VGLSPTSEQA (72 aa)) is disordered. The span at 267–277 (STGSSIHQACG) shows a compositional bias: polar residues.

In terms of tissue distribution, during stages 8.5 to 10, expressed in the part of the dorsal mesoderm invaginating the dorsal blastopore lip (Spemann organizer), as a direct response to dorsal mesodermal induction. At stage 12 (mid-gastrulation), restricted to the dorsal midline in the deeper layers of mesodermal cells. Continuously present in the posterior portion of invaginated mesoderm and expressed within the notochord. Also present in the midline of the neural plate during gastrulation, but absent from the notoplate in exogastrula embryos. Expression in the notochord continues in neurula-stage embryos and at stage 20 in addition to the notochord, expression is seen in the pharyngeal endoderm.

Its subcellular location is the nucleus. In terms of biological role, transcriptional repressor involved in embryonic nervous system development. Plays a role in the induction and patterning of the anterior-posterior neural axis. Involved in the establishment of floor plate differentiation from neural plate cells during gastrulation. Binds the anf1 promoter sequence to restrict expression of anf1 to the anterior of the neural plate, thereby patterning the forebrain. Can bind to the HNF-3-alpha DNA target sequence. Cooperates with t/bra in a dose-dependent manner to specify dorsal mesoderm formation, including notochord. Binds to DNA via the target sequence 5'-[GA]TAAA[TC]A-3', with 5'-GTAAATA-3' being the preferred binding site. The polypeptide is Forkhead box protein A4-A (foxa4-a) (Xenopus laevis (African clawed frog)).